Reading from the N-terminus, the 220-residue chain is Uracil-DNA glycosylase (220 aa).

The Proton acceptor role is filled by Asp-60.

The protein belongs to the uracil-DNA glycosylase (UDG) superfamily. UNG family.

It localises to the cytoplasm. It carries out the reaction Hydrolyzes single-stranded DNA or mismatched double-stranded DNA and polynucleotides, releasing free uracil.. Its function is as follows. Excises uracil residues from the DNA which can arise as a result of misincorporation of dUMP residues by DNA polymerase or due to deamination of cytosine. This Francisella tularensis subsp. holarctica (strain FTNF002-00 / FTA) protein is Uracil-DNA glycosylase.